Here is a 316-residue protein sequence, read N- to C-terminus: HTH-type transcriptional regulator PecT (316 aa).

An HTH lysR-type domain is found at 11–68 (LDLDLLRTFVAVADLNTFAAAAVAVCRTQSAVSQQMQRLEQLIGKELFARHGRNKLLT). The segment at residues 28–47 (FAAAAVAVCRTQSAVSQQMQ) is a DNA-binding region (H-T-H motif). The interval 293 to 316 (LPVSTGTESELREPPTDESLKDIT) is disordered. Over residues 301–316 (SELREPPTDESLKDIT) the composition is skewed to basic and acidic residues.

This sequence belongs to the LysR transcriptional regulatory family.

Regulates pectinase gene expression. The chain is HTH-type transcriptional regulator PecT (pecT) from Dickeya dadantii (strain 3937) (Erwinia chrysanthemi (strain 3937)).